Consider the following 138-residue polypeptide: ATP synthase epsilon chain (138 aa).

It belongs to the ATPase epsilon chain family. As to quaternary structure, F-type ATPases have 2 components, CF(1) - the catalytic core - and CF(0) - the membrane proton channel. CF(1) has five subunits: alpha(3), beta(3), gamma(1), delta(1), epsilon(1). CF(0) has three main subunits: a, b and c.

It is found in the cellular thylakoid membrane. Produces ATP from ADP in the presence of a proton gradient across the membrane. This is ATP synthase epsilon chain from Microcystis aeruginosa (strain NIES-843 / IAM M-2473).